Reading from the N-terminus, the 459-residue chain is Phosphoglucosamine mutase (459 aa).

The active-site Phosphoserine intermediate is Ser-105. Mg(2+) is bound by residues Ser-105, Asp-252, Asp-254, and Asp-256. Ser-105 is modified (phosphoserine).

Belongs to the phosphohexose mutase family. The cofactor is Mg(2+). In terms of processing, activated by phosphorylation.

The enzyme catalyses alpha-D-glucosamine 1-phosphate = D-glucosamine 6-phosphate. In terms of biological role, catalyzes the conversion of glucosamine-6-phosphate to glucosamine-1-phosphate. The chain is Phosphoglucosamine mutase from Bifidobacterium adolescentis (strain ATCC 15703 / DSM 20083 / NCTC 11814 / E194a).